The chain runs to 382 residues: Putative NADPH dehydrogenase C5H10.04 (382 aa).

Positions 28 and 189 each coordinate FMN. Residues histidine 189 and asparagine 192 each contribute to the substrate site. FMN contacts are provided by arginine 242 and arginine 334. Tyrosine 361 provides a ligand contact to substrate.

It belongs to the NADH:flavin oxidoreductase/NADH oxidase family. Homodimer or heterodimer. It depends on FMN as a cofactor.

It catalyses the reaction A + NADPH + H(+) = AH2 + NADP(+). The sequence is that of Putative NADPH dehydrogenase C5H10.04 from Schizosaccharomyces pombe (strain 972 / ATCC 24843) (Fission yeast).